Reading from the N-terminus, the 444-residue chain is Acyl-CoA (8-3)-desaturase (444 aa).

At Met1 the chain carries N-acetylmethionine. At Met1 to Arg121 the chain is on the cytoplasmic side. One can recognise a Cytochrome b5 heme-binding domain in the interval Pro17 to Ser94. A helical transmembrane segment spans residues Met122–Leu142. The Lumenal segment spans residues Asp143 to Ala145. The chain crosses the membrane as a helical span at residues Ala146–Val170. Residues Gln171 to Phe267 are Cytoplasmic-facing. A Histidine box-1 motif is present at residues His179–His183. The Histidine box-2 signature appears at His216–His220. Residues Leu268 to Ile288 traverse the membrane as a helical segment. Residues Gln289–Arg305 are Lumenal-facing. The chain crosses the membrane as a helical span at residues Phe306 to Val326. Over Arg327 to Gln444 the chain is Cytoplasmic. The Histidine box-3 motif lies at Gln382 to His386.

It belongs to the fatty acid desaturase type 1 family. In terms of tissue distribution, widely expressed, with highest levels in liver, brain, adrenal gland and heart. Highly expressed in fetal liver and brain.

It is found in the endoplasmic reticulum membrane. The protein localises to the mitochondrion. The enzyme catalyses (8Z,11Z,14Z)-eicosatrienoyl-CoA + 2 Fe(II)-[cytochrome b5] + O2 + 2 H(+) = (5Z,8Z,11Z,14Z)-eicosatetraenoyl-CoA + 2 Fe(III)-[cytochrome b5] + 2 H2O. The catalysed reaction is (8Z,11Z,14Z,17Z)-eicosatetraenoyl-CoA + 2 Fe(II)-[cytochrome b5] + O2 + 2 H(+) = (5Z,8Z,11Z,14Z,17Z)-eicosapentaenoyl-CoA + 2 Fe(III)-[cytochrome b5] + 2 H2O. It catalyses the reaction (11E)-octadecenoyl-CoA + 2 Fe(II)-[cytochrome b5] + O2 + 2 H(+) = (5Z,11E)-octadecadienoyl-CoA + 2 Fe(III)-[cytochrome b5] + 2 H2O. Its pathway is lipid metabolism; polyunsaturated fatty acid biosynthesis. Functionally, acts as a front-end fatty acyl-coenzyme A (CoA) desaturase that introduces a cis double bond at carbon 5 located between a preexisting double bond and the carboxyl end of the fatty acyl chain. Involved in biosynthesis of highly unsaturated fatty acids (HUFA) from the essential polyunsaturated fatty acids (PUFA) linoleic acid (LA) (18:2n-6) and alpha-linolenic acid (ALA) (18:3n-3) precursors. Specifically, desaturates dihomo-gamma-linoleoate (DGLA) (20:3n-6) and eicosatetraenoate (ETA) (20:4n-3) to generate arachidonate (AA) (20:4n-6) and eicosapentaenoate (EPA) (20:5n-3), respectively. As a rate limiting enzyme for DGLA (20:3n-6) and AA (20:4n-6)-derived eicosanoid biosynthesis, controls the metabolism of inflammatory lipids like prostaglandin E2, critical for efficient acute inflammatory response and maintenance of epithelium homeostasis. Contributes to membrane phospholipid biosynthesis by providing AA (20:4n-6) as a major acyl chain esterified into phospholipids. In particular, regulates phosphatidylinositol-4,5-bisphosphate levels, modulating inflammatory cytokine production in T-cells. Also desaturates (11E)-octadecenoate (trans-vaccenoate)(18:1n-9), a metabolite in the biohydrogenation pathway of LA (18:2n-6). Its function is as follows. Does not exhibit any catalytic activity toward 20:3n-6, but it may enhance FADS2 activity. The polypeptide is Acyl-CoA (8-3)-desaturase (Homo sapiens (Human)).